Here is a 228-residue protein sequence, read N- to C-terminus: Isoprenyl transferase (228 aa).

D9 is a catalytic residue. D9 contacts Mg(2+). Residues 10-13 (GNGR), W14, R22, H26, and 54-56 (STE) contribute to the substrate site. N57 functions as the Proton acceptor in the catalytic mechanism. Residues W58, R60, R175, and 181-183 (RMS) contribute to the substrate site. Residue E194 participates in Mg(2+) binding.

The protein belongs to the UPP synthase family. In terms of assembly, homodimer. Mg(2+) is required as a cofactor.

Functionally, catalyzes the condensation of isopentenyl diphosphate (IPP) with allylic pyrophosphates generating different type of terpenoids. The sequence is that of Isoprenyl transferase from Treponema pallidum (strain Nichols).